The following is a 388-amino-acid chain: Chorismate synthase (388 aa).

The NADP(+) site is built by Arg-39 and Arg-45. FMN-binding positions include 130–132 (RSS), 251–252 (NA), Gly-296, 311–315 (KPIPT), and Arg-337.

The protein belongs to the chorismate synthase family. Homotetramer. The cofactor is FMNH2.

It catalyses the reaction 5-O-(1-carboxyvinyl)-3-phosphoshikimate = chorismate + phosphate. The protein operates within metabolic intermediate biosynthesis; chorismate biosynthesis; chorismate from D-erythrose 4-phosphate and phosphoenolpyruvate: step 7/7. Its function is as follows. Catalyzes the anti-1,4-elimination of the C-3 phosphate and the C-6 proR hydrogen from 5-enolpyruvylshikimate-3-phosphate (EPSP) to yield chorismate, which is the branch point compound that serves as the starting substrate for the three terminal pathways of aromatic amino acid biosynthesis. This reaction introduces a second double bond into the aromatic ring system. This is Chorismate synthase from Streptococcus pyogenes serotype M5 (strain Manfredo).